The primary structure comprises 331 residues: DNA-directed RNA polymerase subunit alpha (331 aa).

Residues 1–233 form an alpha N-terminal domain (alpha-NTD) region; the sequence is MVREKVTVST…DLFIPFLHAE (233 aa). The segment at 265–331 is alpha C-terminal domain (alpha-CTD); it reads KEIELKYIFI…GILEKHFTID (67 aa).

Belongs to the RNA polymerase alpha chain family. In plastids the minimal PEP RNA polymerase catalytic core is composed of four subunits: alpha, beta, beta', and beta''. When a (nuclear-encoded) sigma factor is associated with the core the holoenzyme is formed, which can initiate transcription.

Its subcellular location is the plastid. The protein localises to the chloroplast. It carries out the reaction RNA(n) + a ribonucleoside 5'-triphosphate = RNA(n+1) + diphosphate. DNA-dependent RNA polymerase catalyzes the transcription of DNA into RNA using the four ribonucleoside triphosphates as substrates. The polypeptide is DNA-directed RNA polymerase subunit alpha (Vitis vinifera (Grape)).